Consider the following 441-residue polypeptide: Cysteine--tRNA ligase (441 aa).

Zn(2+) is bound at residue Cys24. The short motif at 26–36 is the 'HIGH' region element; that stretch reads PTIYDYIHIGN. The Zn(2+) site is built by Cys204, His230, and Glu234. The 'KMSKS' region motif lies at 262-266; it reads KMSKS. Lys265 contacts ATP.

The protein belongs to the class-I aminoacyl-tRNA synthetase family. In terms of assembly, monomer. It depends on Zn(2+) as a cofactor.

Its subcellular location is the cytoplasm. The catalysed reaction is tRNA(Cys) + L-cysteine + ATP = L-cysteinyl-tRNA(Cys) + AMP + diphosphate. The protein is Cysteine--tRNA ligase of Mesoplasma florum (strain ATCC 33453 / NBRC 100688 / NCTC 11704 / L1) (Acholeplasma florum).